The chain runs to 120 residues: U13-lycotoxin-Ls1f (120 aa).

The first 19 residues, 1-19 (MKILFVLISILYAVYRFSS), serve as a signal peptide directing secretion. The propeptide occupies 20-54 (EEDVDSAYLANELEPVEDINSEQYAALEPKEEQER). Cystine bridges form between cysteine 56–cysteine 70, cysteine 63–cysteine 76, cysteine 69–cysteine 87, and cysteine 78–cysteine 85. Residues 56–95 (CAGMGQDCKDDCDCCLNIATCNCWFGRYFCSCTFGDYQTC) form the Agouti domain.

This sequence belongs to the neurotoxin 05 (agouti) family. Contains 6 disulfide bonds. As to expression, expressed by the venom gland.

It is found in the secreted. The protein is U13-lycotoxin-Ls1f of Lycosa singoriensis (Wolf spider).